The primary structure comprises 226 residues: 2-C-methyl-D-erythritol 4-phosphate cytidylyltransferase (226 aa).

Belongs to the IspD/TarI cytidylyltransferase family. IspD subfamily.

The catalysed reaction is 2-C-methyl-D-erythritol 4-phosphate + CTP + H(+) = 4-CDP-2-C-methyl-D-erythritol + diphosphate. The protein operates within isoprenoid biosynthesis; isopentenyl diphosphate biosynthesis via DXP pathway; isopentenyl diphosphate from 1-deoxy-D-xylulose 5-phosphate: step 2/6. Functionally, catalyzes the formation of 4-diphosphocytidyl-2-C-methyl-D-erythritol from CTP and 2-C-methyl-D-erythritol 4-phosphate (MEP). This is 2-C-methyl-D-erythritol 4-phosphate cytidylyltransferase from Actinobacillus pleuropneumoniae serotype 7 (strain AP76).